A 215-amino-acid polypeptide reads, in one-letter code: MDFSIEQKYQELLKIISSVSRETMQDLMHFESLIIQWNKHINLISSSTIPLLWTRHILDSAQIYPLHSDLLHWCDLGSGGGFPAIVIAIFMKEKKTGHIDLVESNGKKVAFLRTVIAQLDLPATVYHCRIEDVTQKIKNPEVITARGLACLDDLLRLIFPLLTQKTIALLQKGRDYSKEIKNASANWQFDLLKHKSKIDENSVILEISQVRSFRG.

S-adenosyl-L-methionine-binding positions include Gly77, Phe82, 130–131 (IE), and Arg146.

The protein belongs to the methyltransferase superfamily. RNA methyltransferase RsmG family.

It localises to the cytoplasm. The catalysed reaction is guanosine(527) in 16S rRNA + S-adenosyl-L-methionine = N(7)-methylguanosine(527) in 16S rRNA + S-adenosyl-L-homocysteine. Functionally, specifically methylates the N7 position of guanine in position 527 of 16S rRNA. In Bartonella henselae (strain ATCC 49882 / DSM 28221 / CCUG 30454 / Houston 1) (Rochalimaea henselae), this protein is Ribosomal RNA small subunit methyltransferase G.